The sequence spans 186 residues: Lipid A palmitoyltransferase PagP (186 aa).

An N-terminal signal peptide occupies residues 1 to 25; that stretch reads MNVSKYVAIFSFVFIQLISVGKVFA. Active-site residues include His-58, Asp-101, and Ser-102.

It belongs to the lipid A palmitoyltransferase family. In terms of assembly, homodimer.

It localises to the cell outer membrane. It carries out the reaction lipid A (E. coli) + a 1-hexadecanoyl-2-acyl-sn-glycero-3-phosphocholine = hepta-acyl lipid A (E. coli) + a 2-acyl-sn-glycero-3-phosphocholine. It catalyses the reaction lipid IIA + a 1-hexadecanoyl-2-acyl-sn-glycero-3-phosphocholine = lipid IIB + a 2-acyl-sn-glycero-3-phosphocholine. The enzyme catalyses lipid IVA (E. coli) + a 1-hexadecanoyl-2-acyl-sn-glycero-3-phosphocholine = lipid IVB (E. coli) + a 2-acyl-sn-glycero-3-phosphocholine. With respect to regulation, inhibited by lauryldimethylamine oxide (LDAO) and dodecylphosphocholine (DPC). Its function is as follows. Transfers a palmitate residue from the sn-1 position of a phospholipid to the N-linked hydroxymyristate on the proximal unit of lipid A or its precursors. Phosphatidylglycerol (PtdGro), phosphatidylethanolamine (PtdEtn), phosphatidylserine (PtdSer) and phosphatidic acid (Ptd-OH) are all effective acyl donors. The protein is Lipid A palmitoyltransferase PagP of Escherichia coli (strain K12).